Consider the following 227-residue polypeptide: Cytochrome c oxidase subunit 2 (227 aa).

Over 1-14 the chain is Mitochondrial intermembrane; that stretch reads MAYPMQLGFQDATS. The chain crosses the membrane as a helical span at residues 15-45; it reads PIMEELLHFHDHTLMIVFLISSLVLYIISLM. At 46-59 the chain is on the mitochondrial matrix side; sequence LTTKLTHTSTMDAQ. Residues 60–87 traverse the membrane as a helical segment; the sequence is EVETIWTILPAIILILIALPSLRILYMM. Residues 88 to 227 are Mitochondrial intermembrane-facing; the sequence is DEINNPSLTV…YFEKWSASML (140 aa). His161, Cys196, Glu198, Cys200, His204, and Met207 together coordinate Cu cation. A Mg(2+)-binding site is contributed by Glu198. Tyr218 carries the post-translational modification Phosphotyrosine.

This sequence belongs to the cytochrome c oxidase subunit 2 family. In terms of assembly, component of the cytochrome c oxidase (complex IV, CIV), a multisubunit enzyme composed of 14 subunits. The complex is composed of a catalytic core of 3 subunits MT-CO1, MT-CO2 and MT-CO3, encoded in the mitochondrial DNA, and 11 supernumerary subunits COX4I, COX5A, COX5B, COX6A, COX6B, COX6C, COX7A, COX7B, COX7C, COX8 and NDUFA4, which are encoded in the nuclear genome. The complex exists as a monomer or a dimer and forms supercomplexes (SCs) in the inner mitochondrial membrane with NADH-ubiquinone oxidoreductase (complex I, CI) and ubiquinol-cytochrome c oxidoreductase (cytochrome b-c1 complex, complex III, CIII), resulting in different assemblies (supercomplex SCI(1)III(2)IV(1) and megacomplex MCI(2)III(2)IV(2)). Found in a complex with TMEM177, COA6, COX18, COX20, SCO1 and SCO2. Interacts with TMEM177 in a COX20-dependent manner. Interacts with COX20. Interacts with COX16. It depends on Cu cation as a cofactor.

It is found in the mitochondrion inner membrane. The catalysed reaction is 4 Fe(II)-[cytochrome c] + O2 + 8 H(+)(in) = 4 Fe(III)-[cytochrome c] + 2 H2O + 4 H(+)(out). Component of the cytochrome c oxidase, the last enzyme in the mitochondrial electron transport chain which drives oxidative phosphorylation. The respiratory chain contains 3 multisubunit complexes succinate dehydrogenase (complex II, CII), ubiquinol-cytochrome c oxidoreductase (cytochrome b-c1 complex, complex III, CIII) and cytochrome c oxidase (complex IV, CIV), that cooperate to transfer electrons derived from NADH and succinate to molecular oxygen, creating an electrochemical gradient over the inner membrane that drives transmembrane transport and the ATP synthase. Cytochrome c oxidase is the component of the respiratory chain that catalyzes the reduction of oxygen to water. Electrons originating from reduced cytochrome c in the intermembrane space (IMS) are transferred via the dinuclear copper A center (CU(A)) of subunit 2 and heme A of subunit 1 to the active site in subunit 1, a binuclear center (BNC) formed by heme A3 and copper B (CU(B)). The BNC reduces molecular oxygen to 2 water molecules using 4 electrons from cytochrome c in the IMS and 4 protons from the mitochondrial matrix. This is Cytochrome c oxidase subunit 2 (MT-CO2) from Bison bonasus (European bison).